Reading from the N-terminus, the 467-residue chain is Argininosuccinate lyase (467 aa).

Positions 27, 114, and 159 each coordinate 2-(N(omega)-L-arginino)succinate. The active-site Proton acceptor is His-160. The Proton donor role is filled by Ser-281. 2-(N(omega)-L-arginino)succinate-binding residues include Asn-289, Tyr-321, Gln-326, and Lys-329.

Belongs to the lyase 1 family. Argininosuccinate lyase subfamily. Homotetramer.

The enzyme catalyses 2-(N(omega)-L-arginino)succinate = fumarate + L-arginine. It functions in the pathway amino-acid biosynthesis; L-arginine biosynthesis; L-arginine from L-ornithine and carbamoyl phosphate: step 3/3. Its pathway is nitrogen metabolism; urea cycle; L-arginine and fumarate from (N(omega)-L-arginino)succinate: step 1/1. In Aquarana catesbeiana (American bullfrog), this protein is Argininosuccinate lyase (ASL).